The following is a 346-amino-acid chain: Biotin synthase (346 aa).

The Radical SAM core domain occupies 38–256; sequence QQVQVSTLLS…IAVARIMMPT (219 aa). Cys-53, Cys-57, and Cys-60 together coordinate [4Fe-4S] cluster. 4 residues coordinate [2Fe-2S] cluster: Cys-97, Cys-128, Cys-188, and Arg-260.

Belongs to the radical SAM superfamily. Biotin synthase family. In terms of assembly, homodimer. [4Fe-4S] cluster is required as a cofactor. [2Fe-2S] cluster serves as cofactor.

It catalyses the reaction (4R,5S)-dethiobiotin + (sulfur carrier)-SH + 2 reduced [2Fe-2S]-[ferredoxin] + 2 S-adenosyl-L-methionine = (sulfur carrier)-H + biotin + 2 5'-deoxyadenosine + 2 L-methionine + 2 oxidized [2Fe-2S]-[ferredoxin]. It functions in the pathway cofactor biosynthesis; biotin biosynthesis; biotin from 7,8-diaminononanoate: step 2/2. Functionally, catalyzes the conversion of dethiobiotin (DTB) to biotin by the insertion of a sulfur atom into dethiobiotin via a radical-based mechanism. The polypeptide is Biotin synthase (Salmonella dublin (strain CT_02021853)).